The following is a 533-amino-acid chain: Multicopy suppressor of sporulation protein msa1 (533 aa).

The interval 30 to 68 is disordered; it reads DIPPGSLSENDNSTTFIKPPLETASSSTPIPSSSSSGVL. Residues 36-45 are compositionally biased toward polar residues; the sequence is LSENDNSTTF. The span at 54–68 shows a compositional bias: low complexity; the sequence is SSSTPIPSSSSSGVL. One can recognise an RRM 1 domain in the interval 79-158; that stretch reads ACLFVASLNS…RHIRIERAKV (80 aa). Positions 237 to 292 are disordered; that stretch reads YKKKGSSPFSPPNAHSRRRKSQGKDQSNTPVIKAPAPIPFSVSSDPPSTMGRSNSA. Over residues 277 to 292 the composition is skewed to polar residues; it reads SVSSDPPSTMGRSNSA. An RRM 2 domain is found at 365 to 441; sequence YSIFVGQLDP…KPLRVEFRQL (77 aa).

The protein resides in the cytoplasm. In terms of biological role, negative regulator of sexual differentiation. Acts by repressing the transcription of meiosis-inducing, ste11-regulated genes. This is Multicopy suppressor of sporulation protein msa1 (msa1) from Schizosaccharomyces pombe (strain 972 / ATCC 24843) (Fission yeast).